Consider the following 197-residue polypeptide: Imidazoleglycerol-phosphate dehydratase (197 aa).

This sequence belongs to the imidazoleglycerol-phosphate dehydratase family.

It localises to the cytoplasm. It catalyses the reaction D-erythro-1-(imidazol-4-yl)glycerol 3-phosphate = 3-(imidazol-4-yl)-2-oxopropyl phosphate + H2O. It participates in amino-acid biosynthesis; L-histidine biosynthesis; L-histidine from 5-phospho-alpha-D-ribose 1-diphosphate: step 6/9. In Streptomyces coelicolor (strain ATCC BAA-471 / A3(2) / M145), this protein is Imidazoleglycerol-phosphate dehydratase (hisB).